A 154-amino-acid polypeptide reads, in one-letter code: Terephthalate 1,2-dioxygenase, terminal oxygenase component subunit beta 2 (154 aa).

Belongs to the bacterial ring-hydroxylating dioxygenase beta subunit family. As to quaternary structure, heterotetramer composed of 2 alpha (TphA2I and TphA2II) and 2 beta (TphA3I and TphA3II) subunits. Part of a multicomponent enzyme system composed of a reductase (TphA1I or TphA1II) and a two-subunit oxygenase component (TphA2I or TphA2II and TphA3I or TphA3II). Fe cation serves as cofactor.

It carries out the reaction terephthalate + NADH + O2 + H(+) = (3S,4R)-3,4-dihydroxycyclohexa-1,5-diene-1,4-dicarboxylate + NAD(+). Inhibited by EDTA. Functionally, component of the terephthalate 1,2-dioxygenase multicomponent enzyme system which catalyzes the dioxygenation of terephthalate (TER/TPA) to 1,2-dihydroxy-3,5-cyclohexadiene-1,4-dicarboxylic acid (DCD). It can also use 2,5-dicarboxypyridine (PDC) and 1,4-napthalenedicarboxylic acid (NDC) as substrates, and preferentially uses NADPH which is the physiological electron donor. This Comamonas sp protein is Terephthalate 1,2-dioxygenase, terminal oxygenase component subunit beta 2 (tphA3II).